A 161-amino-acid chain; its full sequence is Kininogen-2 (161 aa).

An N-terminal signal peptide occupies residues 1–23; the sequence is MRLWFCLSFFVVLCLEHFPGTLA. An intrachain disulfide couples Cys150 to Cys156. At Val160 the chain carries Valine amide.

This sequence belongs to the bradykinin-related peptide family. Expressed by the skin glands.

Its subcellular location is the secreted. Inhibits ACE with a Ki of 1.6 uM, and targets B2 bradykinin receptor (BDKRB2). Provokes contraction of smooth muscle preparation (ileum). In vivo, induces an early hyperalgesic effects in living rats after intraplantar injection. In terms of biological role, inhibits the bradykinin-induced in vitro relaxation of rat arterial smooth muscle and constriction of intestinal smooth muscle. May target bradykinin receptors (BDKRB). The chain is Kininogen-2 from Bombina orientalis (Oriental fire-bellied toad).